We begin with the raw amino-acid sequence, 551 residues long: Tropolone cluster transcription factor tropK (551 aa).

A disordered region spans residues 1-21 (MSVAIKMSTNTVGGQSTRQPP). A compositionally biased stretch (polar residues) spans 7–20 (MSTNTVGGQSTRQP). The zn(2)-C6 fungal-type DNA-binding region spans 25–52 (CLHCRNKKMKCDALQPRCKNCFNAGVEC).

It is found in the nucleus. Functionally, transcription factor that regulates the expression of the gene cluster that mediates the biosynthesis tropolone class of fungal maleic anhydrides, including stipitaldehydic, stipitatonic and stipitatic acids. This Talaromyces stipitatus (strain ATCC 10500 / CBS 375.48 / QM 6759 / NRRL 1006) (Penicillium stipitatum) protein is Tropolone cluster transcription factor tropK.